The following is a 624-amino-acid chain: DNA-directed RNA polymerase subunit gamma (624 aa).

Residues Cys-70, Cys-72, Cys-85, and Cys-88 each contribute to the Zn(2+) site. Residues Asp-466, Asp-468, and Asp-470 each coordinate Mg(2+).

It belongs to the RNA polymerase beta' chain family. RpoC1 subfamily. As to quaternary structure, in cyanobacteria the RNAP catalytic core is composed of 2 alpha, 1 beta, 1 beta', 1 gamma and 1 omega subunit. When a sigma factor is associated with the core the holoenzyme is formed, which can initiate transcription. Requires Mg(2+) as cofactor. Zn(2+) is required as a cofactor.

The catalysed reaction is RNA(n) + a ribonucleoside 5'-triphosphate = RNA(n+1) + diphosphate. In terms of biological role, DNA-dependent RNA polymerase catalyzes the transcription of DNA into RNA using the four ribonucleoside triphosphates as substrates. The protein is DNA-directed RNA polymerase subunit gamma of Synechococcus sp. (strain ATCC 27144 / PCC 6301 / SAUG 1402/1) (Anacystis nidulans).